A 198-amino-acid polypeptide reads, in one-letter code: Ras-related protein Rab-34, isoform NARR (198 aa).

13 consecutive repeat copies span residues 7–15, 16–24, 25–33, 34–42, 43–51, 52–60, 61–69, 70–78, 79–87, 88–96, 97–105, 106–114, and 115–123. The tract at residues 7 to 125 is 13 x 9 AA approximate tandem-repeats of P-R-V-I-V-G-(S/T)-P-R; the sequence is PRDDVGSPRP…RPRVIVGSPR (119 aa). Ser13 carries the post-translational modification Phosphoserine. A disordered region spans residues 37-64; that stretch reads IVGSARARPPPDGTPRPQLAAEESPRPR. Residue Thr69 is modified to Phosphothreonine. A phosphoserine mark is found at Ser78, Ser87, and Ser96. Low complexity predominate over residues 94-121; that stretch reads VASPRPRTPVGSPWPRVVVGTPRPRVIV. A disordered region spans residues 94-198; the sequence is VASPRPRTPV…GAPDRHRGQI (105 aa). Ser123 is subject to Phosphoserine. Residues 145–157 show a composition bias toward basic and acidic residues; it reads RRQDEHSGTRAEG. Residues 161–178 show a composition bias toward low complexity; that stretch reads GGAAPVPEEGGRFARAQR.

In terms of assembly, may interact with EIF5A and ERF1. Post-translationally, phosphorylated during M-phase.

It localises to the nucleus. It is found in the nucleolus. This is Ras-related protein Rab-34, isoform NARR (RAB34) from Homo sapiens (Human).